Here is a 97-residue protein sequence, read N- to C-terminus: HssA/B-like protein 47 (97 aa).

Residues 1–33 are disordered; the sequence is MTLFSSISSISNPMTSSKSSIASFGSGTSMSSN.

This sequence belongs to the hssA/B family.

This Dictyostelium discoideum (Social amoeba) protein is HssA/B-like protein 47 (hssl47).